We begin with the raw amino-acid sequence, 426 residues long: Transcriptional enhancer factor TEF-1 (426 aa).

At Met-1 the chain carries N-acetylmethionine. Polar residues predominate over residues 1–12 (MEPSSWSGSESP). Residues 1 to 31 (MEPSSWSGSESPAENMERMSDSADKPIDNDA) form a disordered region. Ser-11 carries the post-translational modification Phosphoserine. The span at 15–28 (NMERMSDSADKPID) shows a compositional bias: basic and acidic residues. Positions 28 to 104 (DNDAEGVWSP…QVLARRKSRD (77 aa)) form a DNA-binding region, TEA. Lys-108 carries the N6-lactoyllysine modification. The segment at 167 to 426 (GSSQDVKPFV…QHHIYRLVKD (260 aa)) is transcriptional activation.

Interacts with YAP1 and WWTR1/TAZ. Post-translationally, lactylation by AARS1 promotes nuclear localization and stabilization of YAP1, leading to increased Hippo signaling pathway. Delactylated by SIRT1. In developing skeletal muscle and myocardium, in mitotic neuroblasts both in the brain and spinal cord. At later stages of embryogenesis expressed in several developing structures such as the olfactory system, the intestine, and the kidney.

It localises to the nucleus. Functionally, transcription factor which plays a key role in the Hippo signaling pathway, a pathway involved in organ size control and tumor suppression by restricting proliferation and promoting apoptosis. The core of this pathway is composed of a kinase cascade wherein MST1/MST2, in complex with its regulatory protein SAV1, phosphorylates and activates LATS1/2 in complex with its regulatory protein MOB1, which in turn phosphorylates and inactivates YAP1 oncoprotein and WWTR1/TAZ. Acts by mediating gene expression of YAP1 and WWTR1/TAZ, thereby regulating cell proliferation, migration and epithelial mesenchymal transition (EMT) induction. Binds specifically and cooperatively to the SPH and GT-IIC 'enhansons' (5'-GTGGAATGT-3') and activates transcription in vivo in a cell-specific manner. The activation function appears to be mediated by a limiting cell-specific transcriptional intermediary factor (TIF). Involved in cardiac development. Binds to the M-CAT motif. The polypeptide is Transcriptional enhancer factor TEF-1 (Tead1) (Mus musculus (Mouse)).